Here is a 285-residue protein sequence, read N- to C-terminus: Orotidine 5'-phosphate decarboxylase (285 aa).

Substrate contacts are provided by residues D40, 62-64 (KTH), 93-102 (DRKFVDIGST), Y235, and R253. K95 acts as the Proton donor in catalysis.

This sequence belongs to the OMP decarboxylase family.

The catalysed reaction is orotidine 5'-phosphate + H(+) = UMP + CO2. Its pathway is pyrimidine metabolism; UMP biosynthesis via de novo pathway; UMP from orotate: step 2/2. The protein is Orotidine 5'-phosphate decarboxylase (URA3) of Paracoccidioides brasiliensis.